A 619-amino-acid chain; its full sequence is Kininogen-2 (619 aa).

Positions Met1–Thr18 are cleaved as a signal peptide. Gln19 bears the Pyrrolidone carboxylic acid mark. The Cystatin kininogen-type 1 domain occupies Cys27 to Glu131. Intrachain disulfides connect Cys27-Cys589, Cys82-Cys93, Cys106-Cys125, Cys141-Cys144, Cys205-Cys217, Cys228-Cys247, Cys261-Cys264, Cys325-Cys337, and Cys348-Cys367. Residue Asn87 is glycosylated (N-linked (GlcNAc...) asparagine). O-linked (GalNAc...) threonine; partial glycosylation occurs at Thr136. Positions Thr150 to Glu253 constitute a Cystatin kininogen-type 2 domain. Residues Asn168 and Asn169 are each glycosylated (N-linked (GlcNAc...) asparagine). N-linked (GlcNAc...) asparagine; partial glycosylation occurs at Asn197. The N-linked (GlcNAc...) asparagine glycan is linked to Asn204. Residues Val270 to Thr373 form the Cystatin kininogen-type 3 domain. The N-linked (GlcNAc...) asparagine glycan is linked to Asn280. Pro380 carries the 4-hydroxyproline modification. Positions Glu394–Trp495 are disordered. Residue Ser396 is glycosylated (O-linked (GalNAc...) serine). Thr397 and Thr398 each carry an O-linked (GalNAc...) threonine glycan. O-linked (GalNAc...) serine glycans are attached at residues Ser400 and Ser404. Residues Gly442–Gly490 are compositionally biased toward basic residues. O-linked (GalNAc...) serine glycosylation occurs at Ser510. Thr518, Thr522, Thr534, Thr546, Thr551, and Thr568 each carry an O-linked (GalNAc...) threonine glycan.

Post-translationally, bradykinin is released from kininogen by plasma kallikrein. Plasma.

It localises to the secreted. The protein resides in the extracellular space. Functionally, (1) Kininogens are inhibitors of thiol proteases; (2) HMW-kininogen plays an important role in blood coagulation by helping to position optimally prekallikrein and factor XI next to factor XII; (3) HMW-kininogen inhibits the thrombin- and plasmin-induced aggregation of thrombocytes; (4) the active peptide bradykinin that is released from HMW-kininogen shows a variety of physiological effects: (4A) influence in smooth muscle contraction, (4B) induction of hypotension, (4C) natriuresis and diuresis, (4D) decrease in blood glucose level, (4E) it is a mediator of inflammation and causes (4E1) increase in vascular permeability, (4E2) stimulation of nociceptors (4E3) release of other mediators of inflammation (e.g. prostaglandins), (4F) it has a cardioprotective effect (directly via bradykinin action, indirectly via endothelium-derived relaxing factor action); (5) LMW-kininogen inhibits the aggregation of thrombocytes; (6) LMW-kininogen is in contrast to HMW-kininogen not involved in blood clotting. The polypeptide is Kininogen-2 (KNG2) (Bos taurus (Bovine)).